Here is a 380-residue protein sequence, read N- to C-terminus: MAKADFYETLGVSKTADEKELKSAFRKLAMKFHPDKNPGDAESERKFKEINEAYETLKDPQKRAAYDRFGHAAFEQGGMGSAGGGGGFAGGGFSDIFEDIFGEMMGGGRGGNARGRSTGGRERGADLRYNMEISLEEAFTGKTAQIRVPTSITCEVCSGSGAKPGTKPTTCATCQGSGRVRAAQGFFSIERTCPTCQGRGQTISDPCGKCHGQGRVTEERQLSVSIPSGIEDGTRIRLQGEGEAGLRGGPSGDLYIFLSVKPHQFFQREGADLYCSVPISMTTAALGGTFDVTTLDGTKSRVTVPEGTQPGKQFRLKGKGMPVLRSAQMGDLYIQIQIETPQKLTKRQRELLQEFDQISSKENNPESTGFFARMKEFFEG.

Residues 5–70 (DFYETLGVSK…QKRAAYDRFG (66 aa)) form the J domain. The segment at 141–219 (GKTAQIRVPT…CHGQGRVTEE (79 aa)) adopts a CR-type zinc-finger fold. Zn(2+) contacts are provided by C154, C157, C171, C174, C193, C196, C207, and C210. CXXCXGXG motif repeat units follow at residues 154–161 (CEVCSGSG), 171–178 (CATCQGSG), 193–200 (CPTCQGRG), and 207–214 (CGKCHGQG).

It belongs to the DnaJ family. Homodimer. Zn(2+) is required as a cofactor.

It is found in the cytoplasm. Its function is as follows. Participates actively in the response to hyperosmotic and heat shock by preventing the aggregation of stress-denatured proteins and by disaggregating proteins, also in an autonomous, DnaK-independent fashion. Unfolded proteins bind initially to DnaJ; upon interaction with the DnaJ-bound protein, DnaK hydrolyzes its bound ATP, resulting in the formation of a stable complex. GrpE releases ADP from DnaK; ATP binding to DnaK triggers the release of the substrate protein, thus completing the reaction cycle. Several rounds of ATP-dependent interactions between DnaJ, DnaK and GrpE are required for fully efficient folding. Also involved, together with DnaK and GrpE, in the DNA replication of plasmids through activation of initiation proteins. The sequence is that of Chaperone protein DnaJ from Allorhizobium ampelinum (strain ATCC BAA-846 / DSM 112012 / S4) (Agrobacterium vitis (strain S4)).